Here is a 323-residue protein sequence, read N- to C-terminus: MRTATLYRYSVPMEAGVILRHQRLKSRDGLLVKLQQGELSGWGEIAPLPEFSQETLDQAQVAAECWLQHWVSGVESDDSVLPSVAFGLSCAQAELKQTLPLSADYRKASLCTGDPDELFAVLQALPGEKVAKVKVGLYEAVRDGMIVNVLLEALPDLTLRLDANRSWSRAKADGFAKYVNPALRSRIAFLEEPCKTRAESREFAQDTGIAIAWDESVREADFQVEAEPGVAAIVIKPTLVGSLARCQQLVQQAHQAGLVAVISSSIESSLGLTQLARLAAWLTPATVPGLDTLDLMQAQVVRPWPDSPLPLITTEQLGVVWHR.

The active-site Proton donor is the lysine 134. 3 residues coordinate Mg(2+): aspartate 162, glutamate 191, and aspartate 214. Catalysis depends on lysine 236, which acts as the Proton acceptor.

Belongs to the mandelate racemase/muconate lactonizing enzyme family. MenC type 1 subfamily. The cofactor is a divalent metal cation.

The enzyme catalyses (1R,6R)-6-hydroxy-2-succinyl-cyclohexa-2,4-diene-1-carboxylate = 2-succinylbenzoate + H2O. It participates in quinol/quinone metabolism; 1,4-dihydroxy-2-naphthoate biosynthesis; 1,4-dihydroxy-2-naphthoate from chorismate: step 4/7. Its pathway is quinol/quinone metabolism; menaquinone biosynthesis. Its function is as follows. Converts 2-succinyl-6-hydroxy-2,4-cyclohexadiene-1-carboxylate (SHCHC) to 2-succinylbenzoate (OSB). This Yersinia pseudotuberculosis serotype I (strain IP32953) protein is o-succinylbenzoate synthase.